The sequence spans 217 residues: Protein GrpE (217 aa).

Positions 1-63 (MAETSNSENK…AADSELSLQS (63 aa)) are disordered. The span at 10–32 (KTSEEAKASEKNSRSITLEETKL) shows a compositional bias: basic and acidic residues. Low complexity predominate over residues 37 to 63 (SEESTQTTESTQAQAAEAADSELSLQS).

The protein belongs to the GrpE family. In terms of assembly, homodimer.

Its subcellular location is the cytoplasm. Its function is as follows. Participates actively in the response to hyperosmotic and heat shock by preventing the aggregation of stress-denatured proteins, in association with DnaK and GrpE. It is the nucleotide exchange factor for DnaK and may function as a thermosensor. Unfolded proteins bind initially to DnaJ; upon interaction with the DnaJ-bound protein, DnaK hydrolyzes its bound ATP, resulting in the formation of a stable complex. GrpE releases ADP from DnaK; ATP binding to DnaK triggers the release of the substrate protein, thus completing the reaction cycle. Several rounds of ATP-dependent interactions between DnaJ, DnaK and GrpE are required for fully efficient folding. The sequence is that of Protein GrpE from Leptospira borgpetersenii serovar Hardjo-bovis (strain JB197).